The following is a 165-amino-acid chain: SsrA-binding protein (165 aa).

This sequence belongs to the SmpB family.

Its subcellular location is the cytoplasm. Functionally, required for rescue of stalled ribosomes mediated by trans-translation. Binds to transfer-messenger RNA (tmRNA), required for stable association of tmRNA with ribosomes. tmRNA and SmpB together mimic tRNA shape, replacing the anticodon stem-loop with SmpB. tmRNA is encoded by the ssrA gene; the 2 termini fold to resemble tRNA(Ala) and it encodes a 'tag peptide', a short internal open reading frame. During trans-translation Ala-aminoacylated tmRNA acts like a tRNA, entering the A-site of stalled ribosomes, displacing the stalled mRNA. The ribosome then switches to translate the ORF on the tmRNA; the nascent peptide is terminated with the 'tag peptide' encoded by the tmRNA and targeted for degradation. The ribosome is freed to recommence translation, which seems to be the essential function of trans-translation. The chain is SsrA-binding protein from Ruthia magnifica subsp. Calyptogena magnifica.